Here is a 730-residue protein sequence, read N- to C-terminus: MKIESLDLPDEIKRFYENSGILELYPPQAEAVEKGLLEGKNLLAAIPTASGKTLLAELAMLKSVLNGGKALYIVPLRALASEKFRRFQEFSVLGMRVGISTGDYDRRDEGLGINDIIVATSEKTDSLLRNETAWMQEISVVVADEVHLIDSPDRGPTLEITLSKLRRMNPSCQVLALSATVGNADELAAWLDAELVLSEWRPTDLMEGVFYNGIFYCKDKEKPVGQPTKDEAVNLVLDTIKEGGQCLVFESSRKNCMGFAKKAVSAVKKTLSNEDRETLAGIADEIIENSETDVSSVLATCVRSGTAFHHAGLTTPLRELVENGFREGRIKIISSTPTLAAGLNLPARRVIIRSYRRYSSDSGMQPIPVLEYKQMAGRAGRPRLDPYGEAVLLAKSYEEFVFLFEKYIEAGAEDIWSKLGTENALRTHILSTISNGFARTREELMDFLEATFFAFQYSNFGLSAVVDECLDFLRREGMLEKDPDALVSTVFGKLVSRLYIDPLSAALIAKGLREAGTLTELTLLHLICSTPDMRLMYMRSQDYQEVNDYVMAHAGEFSKVPNPFNIAEYEWFLGEVKTSLLLMDWIHEKPENEICLKFGIGEGDIHATADIAEWIMHVTAQLAGLLDLKGAKEASELEKRIRYGAAPELMDLLDIRSVGRVRARKLYEAGFKSTAELAAASPEHIAVLVGPKITERIFKQIGRREAVSEFSDIEPLEKGSSDGQRTISDY.

Residues Gln28 and 46 to 53 each bind ATP; that span reads IPTASGKT. The 167-residue stretch at 33–199 folds into the Helicase ATP-binding domain; the sequence is EKGLLEGKNL…WLDAELVLSE (167 aa). The DEAH box signature appears at 144–147; sequence DEVH. In terms of domain architecture, Helicase C-terminal spans 232–433; that stretch reads AVNLVLDTIK…ALRTHILSTI (202 aa).

The protein belongs to the helicase family. Hel308 subfamily. Monomer.

The catalysed reaction is Couples ATP hydrolysis with the unwinding of duplex DNA by translocating in the 3'-5' direction.. The enzyme catalyses ATP + H2O = ADP + phosphate + H(+). Functionally, DNA-dependent ATPase and 3'-5' DNA helicase that may be involved in repair of stalled replication forks. This chain is ATP-dependent DNA helicase Hel308, found in Methanosarcina mazei (strain ATCC BAA-159 / DSM 3647 / Goe1 / Go1 / JCM 11833 / OCM 88) (Methanosarcina frisia).